A 377-amino-acid polypeptide reads, in one-letter code: MLSSCVRPVPTTVRFVDSLICNSSRSFMDLKALLSSLNDFASLSFAESWDNVGLLVEPSPPHTVNTLFLTNDLTEEVMEEVLQKKADLILSYHPPIFRPMKRITWNTWKERLVIRALENRVGIYSPHTAYDAAPQGVNNWLAKGLGACTSRPIHPSKAPNYPTEGNHRVEFNVNYTQDLDKVMSAVKGIDGVSVTSFSARTGNEEQTRINLNCTQKALMQVVDFLSRNKQLYQKTEILSLEKPLLLHTGMGRLCTLDESVSLATMIDRIKRHLKLSHIRLALGVGRTLESQVKVVALCAGSGSSVLQGVEADLYLTGEMSHHDTLDAASQGINVILCEHSNTERGFLSDLRDMLDSHLENKINIILSETDRDPLQVV.

An N6-acetyllysine modification is found at Lys109. Positions 244–377 (LLLHTGMGRL…ETDRDPLQVV (134 aa)) are mediates interaction with COPS2. At Thr255 the chain carries Phosphothreonine. The residue at position 259 (Ser259) is a Phosphoserine.

Belongs to the GTP cyclohydrolase I type 2/NIF3 family. In terms of assembly, homodimer. Interacts with COPS2. Interacts with THOC7.

It is found in the cytoplasm. Its subcellular location is the nucleus. Functionally, may function as a transcriptional corepressor through its interaction with COPS2, negatively regulating the expression of genes involved in neuronal differentiation. The polypeptide is NIF3-like protein 1 (Homo sapiens (Human)).